The primary structure comprises 358 residues: Type II restriction enzyme CviJI (358 aa).

The cofactor is Mg(2+).

The enzyme catalyses Endonucleolytic cleavage of DNA to give specific double-stranded fragments with terminal 5'-phosphates.. In terms of biological role, a P subtype restriction enzyme that recognizes the double-stranded sequence 5'-RGCY-3' and cleaves after G-2. In the presence of ATP, there is a relaxation of its specificity and it can cleave 5'-RGCN-3' and 5'-YGCY-3', but not 5'-YGCR-3' (R.CviJI* activity). The polypeptide is Type II restriction enzyme CviJI (Paramecium bursaria Chlorella virus IL3A (PBCV-IL3A)).